We begin with the raw amino-acid sequence, 244 residues long: 3-oxoacyl-[acyl-carrier-protein] reductase FabG (244 aa).

NADP(+)-binding positions include 12–15 (GASR), T37, 59–60 (NV), and N86. A substrate-binding site is contributed by S138. Y151 acts as the Proton acceptor in catalysis. NADP(+) is bound by residues 151–155 (YAAAK) and I184.

Belongs to the short-chain dehydrogenases/reductases (SDR) family. Homotetramer.

It carries out the reaction a (3R)-hydroxyacyl-[ACP] + NADP(+) = a 3-oxoacyl-[ACP] + NADPH + H(+). The protein operates within lipid metabolism; fatty acid biosynthesis. Functionally, catalyzes the NADPH-dependent reduction of beta-ketoacyl-ACP substrates to beta-hydroxyacyl-ACP products, the first reductive step in the elongation cycle of fatty acid biosynthesis. The sequence is that of 3-oxoacyl-[acyl-carrier-protein] reductase FabG (fabG) from Vibrio cholerae serotype O1 (strain ATCC 39315 / El Tor Inaba N16961).